We begin with the raw amino-acid sequence, 351 residues long: UDP-3-O-acylglucosamine N-acyltransferase (351 aa).

Catalysis depends on histidine 240, which acts as the Proton acceptor.

This sequence belongs to the transferase hexapeptide repeat family. LpxD subfamily. As to quaternary structure, homotrimer.

It catalyses the reaction a UDP-3-O-[(3R)-3-hydroxyacyl]-alpha-D-glucosamine + a (3R)-hydroxyacyl-[ACP] = a UDP-2-N,3-O-bis[(3R)-3-hydroxyacyl]-alpha-D-glucosamine + holo-[ACP] + H(+). The protein operates within bacterial outer membrane biogenesis; LPS lipid A biosynthesis. Catalyzes the N-acylation of UDP-3-O-acylglucosamine using 3-hydroxyacyl-ACP as the acyl donor. Is involved in the biosynthesis of lipid A, a phosphorylated glycolipid that anchors the lipopolysaccharide to the outer membrane of the cell. The polypeptide is UDP-3-O-acylglucosamine N-acyltransferase (Pseudomonas putida (strain ATCC 47054 / DSM 6125 / CFBP 8728 / NCIMB 11950 / KT2440)).